We begin with the raw amino-acid sequence, 805 residues long: Endonuclease MutS2 (805 aa).

344-351 (GPNGGGKT) provides a ligand contact to ATP. The segment at 705 to 724 (RSRSEKLQAASEARPSAPPG) is disordered. In terms of domain architecture, Smr spans 729–804 (LDVRGLRVEE…GDAVTVVSLR (76 aa)).

Belongs to the DNA mismatch repair MutS family. MutS2 subfamily. As to quaternary structure, homodimer. Binds to stalled ribosomes, contacting rRNA.

Functionally, endonuclease that is involved in the suppression of homologous recombination and thus may have a key role in the control of bacterial genetic diversity. Its function is as follows. Acts as a ribosome collision sensor, splitting the ribosome into its 2 subunits. Detects stalled/collided 70S ribosomes which it binds and splits by an ATP-hydrolysis driven conformational change. Acts upstream of the ribosome quality control system (RQC), a ribosome-associated complex that mediates the extraction of incompletely synthesized nascent chains from stalled ribosomes and their subsequent degradation. Probably generates substrates for RQC. The sequence is that of Endonuclease MutS2 from Anaeromyxobacter sp. (strain Fw109-5).